Consider the following 365-residue polypeptide: Protein RecA (365 aa).

77 to 84 (GPESSGKT) contributes to the ATP binding site.

This sequence belongs to the RecA family.

It is found in the cytoplasm. In terms of biological role, can catalyze the hydrolysis of ATP in the presence of single-stranded DNA, the ATP-dependent uptake of single-stranded DNA by duplex DNA, and the ATP-dependent hybridization of homologous single-stranded DNAs. It interacts with LexA causing its activation and leading to its autocatalytic cleavage. The polypeptide is Protein RecA (Mesorhizobium japonicum (strain LMG 29417 / CECT 9101 / MAFF 303099) (Mesorhizobium loti (strain MAFF 303099))).